The following is a 637-amino-acid chain: Threonine--tRNA ligase (637 aa).

Residues 1 to 61 enclose the TGS domain; sequence MVTVTLPDGS…DADAQLAIVT (61 aa). Positions 244 to 535 are catalytic; the sequence is DHRRLAKQLD…LIEHHAGNFP (292 aa). Zn(2+) contacts are provided by cysteine 335, histidine 386, and histidine 512.

It belongs to the class-II aminoacyl-tRNA synthetase family. As to quaternary structure, homodimer. The cofactor is Zn(2+).

Its subcellular location is the cytoplasm. The enzyme catalyses tRNA(Thr) + L-threonine + ATP = L-threonyl-tRNA(Thr) + AMP + diphosphate + H(+). In terms of biological role, catalyzes the attachment of threonine to tRNA(Thr) in a two-step reaction: L-threonine is first activated by ATP to form Thr-AMP and then transferred to the acceptor end of tRNA(Thr). Also edits incorrectly charged L-seryl-tRNA(Thr). The sequence is that of Threonine--tRNA ligase from Thiobacillus denitrificans (strain ATCC 25259 / T1).